Here is a 206-residue protein sequence, read N- to C-terminus: Geminin (206 aa).

Residues 1 to 18 show a composition bias toward polar residues; sequence MNLSMKQKQEGAQENVKN. The tract at residues 1-42 is disordered; it reads MNLSMKQKQEGAQENVKNSPVPRRTLKMIQPSADGSLVGREN. An N6-acetyllysine modification is found at K27. Phosphoserine occurs at positions 36, 63, and 64. The necessary and sufficient for interaction with IDAS and CDT1 stretch occupies residues 79–158; it reads TQEAFDLISK…AEVIERLSNE (80 aa). Residues 91–141 adopt a coiled-coil conformation; the sequence is PSSQYWKEVAEQRRKALYEALKENEKLHKEIEQKDSEIARLRKENKDLAEV. Residues 157–206 are disordered; it reads NEPLDNFESPDSQEFDSEEEAVEYSELEDSGAGTCAEETVSSSTDARPCT. Over residues 167–185 the composition is skewed to acidic residues; sequence DSQEFDSEEEAVEYSELED. Residues 167-187 are homeodomain binding; the sequence is DSQEFDSEEEAVEYSELEDSG. S181 carries the post-translational modification Phosphoserine; by CK2. Positions 195–206 are enriched in polar residues; it reads TVSSSTDARPCT.

It belongs to the geminin family. As to quaternary structure, homotetramer. Interacts with CDT1; this inhibits binding of the MCM complex to origins of replication. The complex with CDT1 exists in two forms, a 'permissive' heterotrimer and an 'inhibitory' heterohexamer. Interacts (via coiled-coil domain) with IDAS (via coiled-coil domain); this targets GMNN to the nucleus. The heterodimer formed by GMNN and MCIDAS has much lower affinity for CDT1 than the GMNN homodimer. Interacts with a subset of Hox proteins, affinity increasing from anterior to posterior types, the strongest interaction being with HOXB1, HOXC9 and HOXD10. Interacts with LRWD1 from G1/S to mitosis. Phosphorylated during mitosis. Phosphorylation at Ser-181 by CK2 results in enhanced binding to Hox proteins and more potent inhibitory effect on Hox transcriptional activity.

The protein resides in the cytoplasm. It localises to the nucleus. In terms of biological role, inhibits DNA replication by preventing the incorporation of MCM complex into pre-replication complex (pre-RC). It is degraded during the mitotic phase of the cell cycle. Its destruction at the metaphase-anaphase transition permits replication in the succeeding cell cycle. Inhibits histone acetyltransferase activity of KAT7/HBO1 in a CDT1-dependent manner, inhibiting histone H4 acetylation and DNA replication licensing. Inhibits the transcriptional activity of a subset of Hox proteins, enrolling them in cell proliferative control. The polypeptide is Geminin (Gmnn) (Mus musculus (Mouse)).